A 393-amino-acid chain; its full sequence is Digeranylgeranylglycerophospholipid reductase (393 aa).

Residues Ala14, Asp33, Cys44, Ala45, Gly47, Arg100, Ala124, Asp280, Gly292, and Ile293 each contribute to the FAD site.

Belongs to the geranylgeranyl reductase family. DGGGPL reductase subfamily. Requires FAD as cofactor.

The enzyme catalyses a 2,3-bis-O-phytanyl-sn-glycerol 1-phospholipid + 8 A = a 2,3-bis-O-(geranylgeranyl)-sn-glycerol 1-phospholipid + 8 AH2. The catalysed reaction is 2,3-bis-O-(phytanyl)-sn-glycerol 1-phosphate + 8 A = 2,3-bis-O-(geranylgeranyl)-sn-glycerol 1-phosphate + 8 AH2. It carries out the reaction CDP-2,3-bis-O-(geranylgeranyl)-sn-glycerol + 8 AH2 = CDP-2,3-bis-O-(phytanyl)-sn-glycerol + 8 A. It catalyses the reaction archaetidylserine + 8 AH2 = 2,3-bis-O-phytanyl-sn-glycero-3-phospho-L-serine + 8 A. It participates in membrane lipid metabolism; glycerophospholipid metabolism. Functionally, is involved in the reduction of 2,3-digeranylgeranylglycerophospholipids (unsaturated archaeols) into 2,3-diphytanylglycerophospholipids (saturated archaeols) in the biosynthesis of archaeal membrane lipids. Catalyzes the formation of archaetidic acid (2,3-di-O-phytanyl-sn-glyceryl phosphate) from 2,3-di-O-geranylgeranylglyceryl phosphate (DGGGP) via the hydrogenation of each double bond of the isoprenoid chains. Is also probably able to reduce double bonds of geranyl groups in CDP-2,3-bis-O-(geranylgeranyl)-sn-glycerol and archaetidylserine, thus acting at various stages in the biosynthesis of archaeal membrane lipids. The sequence is that of Digeranylgeranylglycerophospholipid reductase from Methanobrevibacter smithii (strain ATCC 35061 / DSM 861 / OCM 144 / PS).